The sequence spans 503 residues: Probable cytosol aminopeptidase (503 aa).

The Mn(2+) site is built by K270 and D275. The active site involves K282. Residues D293, D352, and E354 each contribute to the Mn(2+) site. Residue R356 is part of the active site.

This sequence belongs to the peptidase M17 family. Mn(2+) serves as cofactor.

It localises to the cytoplasm. It carries out the reaction Release of an N-terminal amino acid, Xaa-|-Yaa-, in which Xaa is preferably Leu, but may be other amino acids including Pro although not Arg or Lys, and Yaa may be Pro. Amino acid amides and methyl esters are also readily hydrolyzed, but rates on arylamides are exceedingly low.. It catalyses the reaction Release of an N-terminal amino acid, preferentially leucine, but not glutamic or aspartic acids.. Its function is as follows. Presumably involved in the processing and regular turnover of intracellular proteins. Catalyzes the removal of unsubstituted N-terminal amino acids from various peptides. The sequence is that of Probable cytosol aminopeptidase from Edwardsiella ictaluri (strain 93-146).